Here is a 191-residue protein sequence, read N- to C-terminus: Protein Ves (191 aa).

This sequence belongs to the Ves family.

This is Protein Ves from Escherichia fergusonii (strain ATCC 35469 / DSM 13698 / CCUG 18766 / IAM 14443 / JCM 21226 / LMG 7866 / NBRC 102419 / NCTC 12128 / CDC 0568-73).